The following is a 166-amino-acid chain: MASNKVVFSALLLIIVSVLAATATMADHHKDQVVYSLGERCQPGMGYPMYSLPRCRAVVKRQCVGHGAPGGAVDEQLRQDCCRQLAAVDDSWCRCSALNHMVGGIYRELGATDVGHPMAEVFPGCRRGDLERAAASLPAFCNVDIPNGTGGVCYWLGYPRTPRTGH.

Residues 1-26 (MASNKVVFSALLLIIVSVLAATATMA) form the signal peptide. 5 disulfide bridges follow: Cys-41–Cys-93, Cys-55–Cys-81, Cys-63–Cys-125, Cys-82–Cys-141, and Cys-95–Cys-153. A glycan (N-linked (GlcNAc...) asparagine) is linked at Asn-147.

This sequence belongs to the cereal trypsin/alpha-amylase inhibitor family. Post-translationally, five disulfide bonds are present.

It is found in the secreted. Seed storage protein. This Oryza sativa subsp. japonica (Rice) protein is Seed allergenic protein RAG2 (RAG2).